A 258-amino-acid polypeptide reads, in one-letter code: Pro-thyrotropin-releasing hormone-A (258 aa).

The N-terminal stretch at 1 to 22 is a signal peptide; that stretch reads MKSACLIILASLVVCNLTLARG. At Gln-78 the chain carries Pyrrolidone carboxylic acid. Pro-80 is modified (proline amide). 2 stretches are compositionally biased toward basic and acidic residues: residues 84 to 98 and 107 to 119; these read YQEE…GKRE and EVQK…KRED. Positions 84–124 are disordered; it reads YQEELEKRQHPGKREEDEDEDYDEVQKRQHPGKREDEFDSF. Gln-92 bears the Pyrrolidone carboxylic acid mark. Position 94 is a proline amide (Pro-94). At Gln-112 the chain carries Pyrrolidone carboxylic acid. Position 114 is a proline amide (Pro-114). At Gln-131 the chain carries Pyrrolidone carboxylic acid. Pro-133 is subject to Proline amide. Gln-156 is subject to Pyrrolidone carboxylic acid. Pro-158 carries the proline amide modification. Disordered stretches follow at residues 166-215 and 236-258; these read YSKR…PCDV and SRAE…TEQE. Residue Gln-170 is modified to Pyrrolidone carboxylic acid. Pro-172 is modified (proline amide). The span at 184–193 shows a compositional bias: basic and acidic residues; sequence GDLRELEKRQ. Gln-193 carries the post-translational modification Pyrrolidone carboxylic acid. Residue Pro-195 is modified to Proline amide. At Gln-242 the chain carries Pyrrolidone carboxylic acid. A Proline amide modification is found at Pro-244.

The protein belongs to the TRH family.

It localises to the secreted. Its function is as follows. Functions as a regulator of the biosynthesis of TSH in the anterior pituitary gland and as a neurotransmitter/ neuromodulator in the central and peripheral nervous systems. The polypeptide is Pro-thyrotropin-releasing hormone-A (trha) (Oncorhynchus nerka (Sockeye salmon)).